Here is a 251-residue protein sequence, read N- to C-terminus: Large ribosomal subunit protein uL3 (251 aa).

Position 151 is an N5-methylglutamine (Q151). Positions K214 to G251 are disordered. A compositionally biased stretch (low complexity) spans A231–G251.

This sequence belongs to the universal ribosomal protein uL3 family. Part of the 50S ribosomal subunit. Forms a cluster with proteins L14 and L19. In terms of processing, methylated by PrmB.

In terms of biological role, one of the primary rRNA binding proteins, it binds directly near the 3'-end of the 23S rRNA, where it nucleates assembly of the 50S subunit. The protein is Large ribosomal subunit protein uL3 of Rhizorhabdus wittichii (strain DSM 6014 / CCUG 31198 / JCM 15750 / NBRC 105917 / EY 4224 / RW1) (Sphingomonas wittichii).